Reading from the N-terminus, the 624-residue chain is Chaperone protein HtpG (624 aa).

Positions 1 to 336 are a; substrate-binding; sequence MKGQETRGFQ…SNDLPLNVSR (336 aa). The b stretch occupies residues 337–552; it reads EILQDSTVTR…ADEMSTQMAK (216 aa). Positions 553–624 are c; it reads LFAAAGQSVP…IRRMNQLLVS (72 aa).

Belongs to the heat shock protein 90 family. In terms of assembly, homodimer.

The protein resides in the cytoplasm. Its function is as follows. Molecular chaperone. Has ATPase activity. The protein is Chaperone protein HtpG of Salmonella paratyphi B (strain ATCC BAA-1250 / SPB7).